Here is a 334-residue protein sequence, read N- to C-terminus: NADH dehydrogenase (ubiquinone) complex I, assembly factor 6 homolog (334 aa).

The transit peptide at 1–11 directs the protein to the mitochondrion; that stretch reads MRRLVRNWNCR.

It belongs to the NDUFAF6 family. Associates with mitochondrial complex I assembly intermediates during its biogenesis. Forms a complex including sicily, ND-42 and Hsp83; the complex is necessary to chaperone ND-42 in the cytoplasm before mitochondrial import; the interaction between sicily and ND-42 is direct and occurs preferably between the unprocessed forms in the cytoplasm; the interaction with Hsp83 is direct. Interacts with ND-30; interaction is stronger between the unprocessed forms in the cytoplasm. In terms of tissue distribution, expressed in the ventral nerve cord, larval brain, motor neuron axons, imaginal disks, and muscles (at protein level).

It is found in the mitochondrion inner membrane. The protein resides in the cytoplasm. It localises to the cytosol. In terms of biological role, involved in the assembly of mitochondrial NADH:ubiquinone oxidoreductase complex (Complex I) at early stages. Interacts with cytosolic Hsp90 to chaperone the Complex I subunit ND-42 in the cytoplasm. This Drosophila melanogaster (Fruit fly) protein is NADH dehydrogenase (ubiquinone) complex I, assembly factor 6 homolog.